A 154-amino-acid chain; its full sequence is Large ribosomal subunit protein uL30 (154 aa).

Belongs to the universal ribosomal protein uL30 family. As to quaternary structure, part of the 50S ribosomal subunit.

The protein is Large ribosomal subunit protein uL30 of Methanococcus vannielii.